Reading from the N-terminus, the 539-residue chain is Glucans biosynthesis protein D (539 aa).

The segment at residues 1–31 is a signal peptide (tat-type signal); that stretch reads MHRRNLLKASMALAAYTGLSASGLLAARAWA.

Belongs to the OpgD/OpgG family. Post-translationally, predicted to be exported by the Tat system. The position of the signal peptide cleavage has not been experimentally proven.

It is found in the periplasm. The protein operates within glycan metabolism; osmoregulated periplasmic glucan (OPG) biosynthesis. In terms of biological role, probably involved in the control of the structural glucose backbone of osmoregulated periplasmic glucans (OPGs). This Pseudomonas fluorescens (strain ATCC BAA-477 / NRRL B-23932 / Pf-5) protein is Glucans biosynthesis protein D.